The following is a 280-amino-acid chain: uncharacterized protein (280 aa).

Disordered stretches follow at residues 1–83 (MELK…EEEQ) and 248–280 (IRHREEKDQRDQNQKQKQDDKEQDSYKIEEARL). Over residues 12-25 (SAKTDNHTVYQNSP) the composition is skewed to polar residues. Composition is skewed to basic and acidic residues over residues 41 to 71 (KQTRQEKTTSSKGNTRTESRKFADEEKRVDD) and 249 to 280 (RHREEKDQRDQNQKQKQDDKEQDSYKIEEARL).

The protein belongs to the chlamydial CPn_0705/CT_671/TC_0042 family.

This is an uncharacterized protein from Chlamydia pneumoniae (Chlamydophila pneumoniae).